A 162-amino-acid polypeptide reads, in one-letter code: UPF0114 protein VCM66_0196 (162 aa).

The next 4 helical transmembrane spans lie at isoleucine 15–phenylalanine 35, leucine 53–valine 73, valine 109–methionine 126, and isoleucine 136–leucine 156.

It belongs to the UPF0114 family.

Its subcellular location is the cell membrane. This is UPF0114 protein VCM66_0196 from Vibrio cholerae serotype O1 (strain M66-2).